The primary structure comprises 118 residues: Protein Rev (118 aa).

S5 and S8 each carry phosphoserine; by host CK2. Residues 18–26 (LIKFLYQSN) form a homomultimerization region. The disordered stretch occupies residues 23 to 46 (YQSNPPPSPEGTRQARRNRRRRWR). The Nuclear localization signal and RNA-binding (RRE) signature appears at 34-50 (TRQARRNRRRRWRARQR). The span at 36 to 46 (QARRNRRRRWR) shows a compositional bias: basic residues. Positions 73-84 (LQLPPLERLNLN) match the Nuclear export signal and binding to XPO1 motif. Residues 87-118 (EDCRTSGTQGVGHPQISVESPTVLESGTEEQC) form a disordered region. S92 bears the Phosphoserine; by host mark. Residues 103–112 (SVESPTVLES) show a composition bias toward polar residues.

Belongs to the HIV-1 REV protein family. In terms of assembly, homomultimer; when bound to the RRE. Multimeric assembly is essential for activity and may involve XPO1. Binds to human KPNB1, XPO1, TNPO1, RANBP5 and IPO7. Interacts with the viral Integrase. Interacts with human KHDRBS1. Interacts with human NAP1; this interaction decreases Rev multimerization and stimulates its activity. Interacts with human DEAD-box helicases DDX3 and DDX24; these interactions may serve for viral RNA export to the cytoplasm and packaging, respectively. Interacts with human PSIP1; this interaction may inhibit HIV-1 DNA integration by promoting dissociation of the Integrase-LEDGF/p75 complex. Post-translationally, asymmetrically arginine dimethylated at one site by host PRMT6. Methylation impairs the RNA-binding activity and export of viral RNA from the nucleus to the cytoplasm. In terms of processing, phosphorylated by protein kinase CK2. Presence of, and maybe binding to the N-terminus of the regulatory beta subunit of CK2 is necessary for CK2-mediated Rev's phosphorylation.

Its subcellular location is the host nucleus. It is found in the host nucleolus. The protein localises to the host cytoplasm. In terms of biological role, escorts unspliced or incompletely spliced viral pre-mRNAs (late transcripts) out of the nucleus of infected cells. These pre-mRNAs carry a recognition sequence called Rev responsive element (RRE) located in the env gene, that is not present in fully spliced viral mRNAs (early transcripts). This function is essential since most viral proteins are translated from unspliced or partially spliced pre-mRNAs which cannot exit the nucleus by the pathway used by fully processed cellular mRNAs. Rev itself is translated from a fully spliced mRNA that readily exits the nucleus. Rev's nuclear localization signal (NLS) binds directly to KPNB1/Importin beta-1 without previous binding to KPNA1/Importin alpha-1. KPNB1 binds to the GDP bound form of RAN (Ran-GDP) and targets Rev to the nucleus. In the nucleus, the conversion from Ran-GDP to Ran-GTP dissociates Rev from KPNB1 and allows Rev's binding to the RRE in viral pre-mRNAs. Rev multimerization on the RRE via cooperative assembly exposes its nuclear export signal (NES) to the surface. Rev can then form a complex with XPO1/CRM1 and Ran-GTP, leading to nuclear export of the complex. Conversion from Ran-GTP to Ran-GDP mediates dissociation of the Rev/RRE/XPO1/RAN complex, so that Rev can return to the nucleus for a subsequent round of export. Beside KPNB1, also seems to interact with TNPO1/Transportin-1, RANBP5/IPO5 and IPO7/RANBP7 for nuclear import. The nucleoporin-like HRB/RIP is an essential cofactor that probably indirectly interacts with Rev to release HIV RNAs from the perinuclear region to the cytoplasm. The sequence is that of Protein Rev from Human immunodeficiency virus type 1 group M subtype D (isolate ELI) (HIV-1).